Here is a 358-residue protein sequence, read N- to C-terminus: Neutral protease 2 homolog PABG_02362 (358 aa).

Residues Met-1–Ala-19 form the signal peptide. Residues Gly-20 to Ile-182 constitute a propeptide that is removed on maturation. 2 disulfide bridges follow: Cys-188-Cys-259 and Cys-266-Cys-284. The N-linked (GlcNAc...) asparagine glycan is linked to Asn-249. Residue His-309 participates in Zn(2+) binding. Glu-310 is an active-site residue. Zn(2+)-binding residues include His-313 and Asp-324.

The protein belongs to the peptidase M35 family. Requires Zn(2+) as cofactor.

It localises to the secreted. It catalyses the reaction Preferential cleavage of bonds with hydrophobic residues in P1'. Also 3-Asn-|-Gln-4 and 8-Gly-|-Ser-9 bonds in insulin B chain.. In terms of biological role, secreted metalloproteinase that allows assimilation of proteinaceous substrates. Shows high activities on basic nuclear substrates such as histone and protamine. In Paracoccidioides brasiliensis (strain Pb03), this protein is Neutral protease 2 homolog PABG_02362.